We begin with the raw amino-acid sequence, 291 residues long: Lipoyl synthase, mitochondrial (291 aa).

Positions 45, 50, 56, 71, 75, 78, and 283 each coordinate [4Fe-4S] cluster. In terms of domain architecture, Radical SAM core spans 57–272 (WGEGTATFMI…EKIGKELGFR (216 aa)).

It belongs to the radical SAM superfamily. Lipoyl synthase family. [4Fe-4S] cluster is required as a cofactor.

The protein resides in the mitochondrion. The catalysed reaction is [[Fe-S] cluster scaffold protein carrying a second [4Fe-4S](2+) cluster] + N(6)-octanoyl-L-lysyl-[protein] + 2 oxidized [2Fe-2S]-[ferredoxin] + 2 S-adenosyl-L-methionine + 4 H(+) = [[Fe-S] cluster scaffold protein] + N(6)-[(R)-dihydrolipoyl]-L-lysyl-[protein] + 4 Fe(3+) + 2 hydrogen sulfide + 2 5'-deoxyadenosine + 2 L-methionine + 2 reduced [2Fe-2S]-[ferredoxin]. It participates in protein modification; protein lipoylation via endogenous pathway; protein N(6)-(lipoyl)lysine from octanoyl-[acyl-carrier-protein]: step 2/2. Functionally, catalyzes the radical-mediated insertion of two sulfur atoms into the C-6 and C-8 positions of the octanoyl moiety bound to the lipoyl domains of lipoate-dependent enzymes, thereby converting the octanoylated domains into lipoylated derivatives. The sequence is that of Lipoyl synthase, mitochondrial from Nematostella vectensis (Starlet sea anemone).